We begin with the raw amino-acid sequence, 214 residues long: Putative AgrB-like protein (214 aa).

The next 5 helical transmembrane spans lie at 41–61, 82–102, 109–129, 154–174, and 182–202; these read IISV…LIFL, CTLL…SSFF, IIVF…FKFA, ILTI…NLGW, and LSII…GNIL.

This sequence belongs to the AgrB family.

It localises to the cell membrane. In terms of biological role, may be involved in the proteolytic processing of a quorum sensing system signal molecule precursor. In Clostridium perfringens (strain SM101 / Type A), this protein is Putative AgrB-like protein.